A 331-amino-acid chain; its full sequence is Vitamin B12 import system permease protein BtuC (331 aa).

The next 9 membrane-spanning stretches (helical) occupy residues 20 to 42, 62 to 84, 91 to 113, 118 to 140, 147 to 169, 189 to 208, 240 to 262, 277 to 299, and 306 to 325; these read IMSV…FLSP, LVAA…VLLG, GVLG…LPVL, IFML…IARA, RLLL…AFYF, ASWY…VWLC, LAIS…VGLV, YLLP…GARL, and LPLG…WMLV.

Belongs to the binding-protein-dependent transport system permease family. FecCD subfamily. In terms of assembly, the complex is composed of two ATP-binding proteins (BtuD), two transmembrane proteins (BtuC) and a solute-binding protein (BtuF).

Its subcellular location is the cell inner membrane. Its function is as follows. Part of the ABC transporter complex BtuCDF involved in vitamin B12 import. Involved in the translocation of the substrate across the membrane. In Vibrio parahaemolyticus serotype O3:K6 (strain RIMD 2210633), this protein is Vitamin B12 import system permease protein BtuC.